A 321-amino-acid chain; its full sequence is Solute carrier family 25 member 33 (321 aa).

3 Solcar repeats span residues E9 to Q118, N126 to Y213, and T231 to L315. 6 helical membrane passes run L12–L32, V49–V65, G121–V141, L190–L210, F233–P253, and Q298–D318.

Belongs to the mitochondrial carrier (TC 2.A.29) family.

The protein localises to the mitochondrion inner membrane. The catalysed reaction is UTP(in) + UDP(out) = UTP(out) + UDP(in). The enzyme catalyses dUTP(out) + UTP(in) = dUTP(in) + UTP(out). It catalyses the reaction 5-methyl-UTP(out) + UTP(in) = 5-methyl-UTP(in) + UTP(out). It carries out the reaction 5-methyl-UDP(out) + UTP(in) = 5-methyl-UDP(in) + UTP(out). The catalysed reaction is UTP(in) + CTP(out) = UTP(out) + CTP(in). The enzyme catalyses CDP(out) + UTP(in) = CDP(in) + UTP(out). It catalyses the reaction dCTP(out) + UTP(in) = dCTP(in) + UTP(out). It carries out the reaction dCDP(out) + UTP(in) = dCDP(in) + UTP(out). The catalysed reaction is UTP(in) + GTP(out) = UTP(out) + GTP(in). The enzyme catalyses UTP(in) + GDP(out) = UTP(out) + GDP(in). It catalyses the reaction dGTP(out) + UTP(in) = dGTP(in) + UTP(out). It carries out the reaction dGDP(out) + UTP(in) = dGDP(in) + UTP(out). The catalysed reaction is ITP(out) + UTP(in) = ITP(in) + UTP(out). In terms of biological role, mitochondrial transporter that imports/exports pyrimidine nucleotides into and from mitochondria. Selectively transports uridine, thymidine, guanosine, cytosine and inosine (deoxy)nucleoside di- and triphosphates by an antiport mechanism. May import (deoxy)nucleoside triphosphates in exchange for intramitochondrial (deoxy)nucleoside diphosphates, thus providing precursors necessary for de novo synthesis of mitochondrial DNA and RNA while exporting products of their catabolism. Participates in mitochondrial genome maintenance, regulation of mitochondrial membrane potential and mitochondrial respiration. Upon INS or IGF1 stimulation regulates cell growth and proliferation by controlling mitochondrial DNA replication and transcription, the ratio of mitochondria-to nuclear-encoded components of the electron transport chain resulting in control of mitochondrial ROS production. Participates in dendritic cell endocytosis and may associate with mitochondrial oxidative phosphorylation. The chain is Solute carrier family 25 member 33 (SLC25A33) from Bos taurus (Bovine).